Reading from the N-terminus, the 528-residue chain is MDSSSSSSSSSPSSSYGVARVSHISNPCIFGEVGSSSSSTYRDKKWKLMKWVSKLFKSGSNGGGSGAHTNHHPPQFQEDENMVFPLPPSSLDDRSRGARDKEELDRSISLSLADNTKRPHGYGWSMDNNRDFPRPFHGGLNPSSFIPPYEPSYQYRRRQRICGGCNSDIGSGNYLGCMGTFFHPECFRCHSCGYAITEHEFSLSGTKPYHKLCFKELTHPKCEVCHHFIPTNDAGLIEYRCHPFWNQKYCPSHEYDKTARCCSCERLESWDVRYYTLEDGRSLCLECMETAITDTGECQPLYHAIRDYYEGMYMKLDQQIPMLLVQREALNDAIVGEKNGYHHMPETRGLCLSEEQTVTSVLRRPRLGAHRLVGMRTQPQRLTRKCEVTAILVLYGLPRLLTGAILAHELMHGWLRLNGFRNLNPEVEEGICQVLSYMWLESEVLSDPSTRNLPSTSSVATSSSSSFSNKKGGKSNVEKKLGEFFKHQIAHDASPAYGGGFRAANAAACKYGLRRTLDHIRLTGTFPL.

A disordered region spans residues 60 to 108 (SNGGGSGAHTNHHPPQFQEDENMVFPLPPSSLDDRSRGARDKEELDRSI). The span at 91–106 (LDDRSRGARDKEELDR) shows a compositional bias: basic and acidic residues. Residues 99–118 (RDKEELDRSISLSLADNTKR) form the UIM 1 domain. Residues 127-148 (DNNRDFPRPFHGGLNPSSFIPP) enclose the UIM 2; degenerate domain. The region spanning 160–220 (RICGGCNSDI…KLCFKELTHP (61 aa)) is the LIM zinc-binding domain. The disordered stretch occupies residues 447 to 474 (DPSTRNLPSTSSVATSSSSSFSNKKGGK). Over residues 455-470 (STSSVATSSSSSFSNK) the composition is skewed to low complexity.

As to quaternary structure, interacts with ubiquitin, TCP14 and TCP15. Polyubiquitinated by DA2. In terms of tissue distribution, expressed in the vasculature of leaves, inflorescence stems, flowers, hypocotyls, and primary and lateral roots. In roots, expressed in phloem companion cells.

Its function is as follows. Acts redundantly with DA1 and DAR1 to regulate endoreduplication during leaf development. Together with DA1 and DAR1, modulates the protein stability of the transcription factors TCP14 and TCP15, which repress endoreduplication by directly regulating the expression of cell-cycle genes. Involved in root phloem development. Is an essential component of early phloem development, long-distance delivery of phloem content, and proper maintenance of root system architecture. Involved in the control of root meristem size. Functions genetically downstream of cytokinin and IAA3 to maintain normal auxin distribution by influencing polar auxin transport. Acts through the PLETHORA pathway, upstream of PLT1 and PLT2 to influence root stem cell niche activity and thus control root meristem size. This is Protein DA1-related 2 from Arabidopsis thaliana (Mouse-ear cress).